A 314-amino-acid polypeptide reads, in one-letter code: MKVLGIECTAHTFGVGIFDSEKGVLANEKVTYKGYGIHPREAAELHLKEFDKVLLKALEKANISLKDIDLIAVSSGPGLLPTLKLGNYIAVYLGKKLNKPVIGVNHIVAHNEFARYLAKAKDPLFVYVSGANTQFLAIVNNSWFLVGETLDMGVGNLIDKVARDLGLEFPGGPKIEELAKKGKNLIELPYTIKGLNLQLGGIYTYIKRIKDQYSKEDIAYSLQEWVFALILEIAERAMHMLDKKELILTGGVACNNRLNDMAEQMAKENNFKFYRLPCQYLTDNGAMIAYLGYYWYSQGIYYEPKPRPYWRIWI.

Positions 106, 110, and 127 each coordinate Fe cation. Substrate-binding positions include 127–131 (YVSGA), Asp159, Gly172, Glu176, and Asn255. Asp283 contacts Fe cation.

This sequence belongs to the KAE1 / TsaD family. Fe(2+) serves as cofactor.

The protein localises to the cytoplasm. It catalyses the reaction L-threonylcarbamoyladenylate + adenosine(37) in tRNA = N(6)-L-threonylcarbamoyladenosine(37) in tRNA + AMP + H(+). Functionally, required for the formation of a threonylcarbamoyl group on adenosine at position 37 (t(6)A37) in tRNAs that read codons beginning with adenine. Is probably involved in the transfer of the threonylcarbamoyl moiety of threonylcarbamoyl-AMP (TC-AMP) to the N6 group of A37. The chain is tRNA N6-adenosine threonylcarbamoyltransferase from Nanoarchaeum equitans (strain Kin4-M).